The following is a 178-amino-acid chain: uncharacterized protein (178 aa).

This is an uncharacterized protein from Schizosaccharomyces pombe (strain 972 / ATCC 24843) (Fission yeast).